The sequence spans 270 residues: MRPFDLIRFKQSGRPITMLTAWDCLSAALVEAAGADVVLVGDSLGMVALGHATTLPVTLDQMLHHTLAVARGFTASHDQQPLLVCDLPFLSYQCGPDLAVAAAGKLLKESSAAAVKLEGADPEIVAVVDRLVRMGIPVMGHLGLTPQAVHRLGYRRQALDPVSQDRLIEQALTLEKTGCFALVLEHVPSELAARARHELGIPVIGIGAGDDCDGQVRVTADLLGLTPHQPPFSPPQLNGRQLCIEALRGWIQEHQSSSPTTAPPQAEPDC.

The Mg(2+) site is built by Asp-42 and Asp-86. Residues 42 to 43 (DS), Asp-86, and Lys-116 contribute to the 3-methyl-2-oxobutanoate site. Mg(2+) is bound at residue Glu-118. Residue Glu-185 is the Proton acceptor of the active site.

The protein belongs to the PanB family. Homodecamer; pentamer of dimers. It depends on Mg(2+) as a cofactor.

It localises to the cytoplasm. The catalysed reaction is 3-methyl-2-oxobutanoate + (6R)-5,10-methylene-5,6,7,8-tetrahydrofolate + H2O = 2-dehydropantoate + (6S)-5,6,7,8-tetrahydrofolate. Its pathway is cofactor biosynthesis; (R)-pantothenate biosynthesis; (R)-pantoate from 3-methyl-2-oxobutanoate: step 1/2. Catalyzes the reversible reaction in which hydroxymethyl group from 5,10-methylenetetrahydrofolate is transferred onto alpha-ketoisovalerate to form ketopantoate. In Synechococcus sp. (strain CC9902), this protein is 3-methyl-2-oxobutanoate hydroxymethyltransferase.